The sequence spans 426 residues: Glutamyl-tRNA reductase (426 aa).

Substrate-binding positions include 49-52 (TCNR), Ser-101, 106-108 (EPQ), and Gln-112. Cys-50 serves as the catalytic Nucleophile. NADP(+) is bound at residue 181 to 186 (GAGETI). A disordered region spans residues 404–426 (DRLFPEKPGLPTSPHSYPDREDR).

It belongs to the glutamyl-tRNA reductase family. In terms of assembly, homodimer.

It carries out the reaction (S)-4-amino-5-oxopentanoate + tRNA(Glu) + NADP(+) = L-glutamyl-tRNA(Glu) + NADPH + H(+). It participates in porphyrin-containing compound metabolism; protoporphyrin-IX biosynthesis; 5-aminolevulinate from L-glutamyl-tRNA(Glu): step 1/2. In terms of biological role, catalyzes the NADPH-dependent reduction of glutamyl-tRNA(Glu) to glutamate 1-semialdehyde (GSA). This is Glutamyl-tRNA reductase from Xanthomonas campestris pv. phaseoli.